The primary structure comprises 198 residues: Acireductone dioxygenase 2 (198 aa).

The Fe(2+) site is built by histidine 99, histidine 101, glutamate 105, and histidine 144. Ni(2+) contacts are provided by histidine 99, histidine 101, glutamate 105, and histidine 144.

Belongs to the acireductone dioxygenase (ARD) family. Requires Fe(2+) as cofactor. Ni(2+) serves as cofactor. As to expression, ubiquitous.

The protein resides in the cytoplasm. It is found in the nucleus. The enzyme catalyses 1,2-dihydroxy-5-(methylsulfanyl)pent-1-en-3-one + O2 = 4-methylsulfanyl-2-oxobutanoate + formate + 2 H(+). It carries out the reaction 1,2-dihydroxy-5-(methylsulfanyl)pent-1-en-3-one + O2 = 3-(methylsulfanyl)propanoate + CO + formate + 2 H(+). The protein operates within amino-acid biosynthesis; L-methionine biosynthesis via salvage pathway; L-methionine from S-methyl-5-thio-alpha-D-ribose 1-phosphate: step 5/6. Functionally, catalyzes 2 different reactions between oxygen and the acireductone 1,2-dihydroxy-3-keto-5-methylthiopentene (DHK-MTPene) depending upon the metal bound in the active site. Fe-containing acireductone dioxygenase (Fe-ARD) produces formate and 2-keto-4-methylthiobutyrate (KMTB), the alpha-ketoacid precursor of methionine in the methionine recycle pathway. Ni-containing acireductone dioxygenase (Ni-ARD) produces methylthiopropionate, carbon monoxide and formate, and does not lie on the methionine recycle pathway. The chain is Acireductone dioxygenase 2 (ARD2) from Oryza sativa subsp. indica (Rice).